The primary structure comprises 477 residues: Salivary plasminogen activator alpha 2 (477 aa).

Residues methionine 1–arginine 36 form the signal peptide. A Fibronectin type-I domain is found at valine 40–valine 82. Cystine bridges form between cysteine 42–cysteine 72, cysteine 70–cysteine 79, cysteine 87–cysteine 98, cysteine 92–cysteine 109, cysteine 111–cysteine 120, cysteine 128–cysteine 209, cysteine 149–cysteine 191, cysteine 180–cysteine 204, cysteine 214–cysteine 345, cysteine 257–cysteine 273, cysteine 265–cysteine 334, cysteine 359–cysteine 434, cysteine 391–cysteine 407, and cysteine 424–cysteine 452. Positions proline 83–glutamate 121 constitute an EGF-like domain. A Kringle domain is found at cysteine 128–cysteine 209. Asparagine 185 carries N-linked (GlcNAc...) asparagine glycosylation. Residues serine 226 to arginine 476 form the Peptidase S1 domain. Residues histidine 272 and aspartate 321 each act as charge relay system in the active site. The N-linked (GlcNAc...) asparagine glycan is linked to asparagine 398. The active-site Charge relay system is the serine 428.

It belongs to the peptidase S1 family. As to quaternary structure, monomer.

It localises to the secreted. The enzyme catalyses Specific cleavage of Arg-|-Val bond in plasminogen to form plasmin.. Activity toward plasminogen is stimulated in the presence of fibrin I. Its function is as follows. Probably essential to support the feeding habits of this exclusively haematophagous animal. Probable potent thrombolytic agent. This chain is Salivary plasminogen activator alpha 2, found in Desmodus rotundus (Vampire bat).